Reading from the N-terminus, the 165-residue chain is NADPH-dependent 7-cyano-7-deazaguanine reductase (165 aa).

Residue C56 is the Thioimide intermediate of the active site. D63 (proton donor) is an active-site residue. Residues 78 to 80 (VES) and 97 to 98 (HE) each bind substrate.

Belongs to the GTP cyclohydrolase I family. QueF type 1 subfamily.

It is found in the cytoplasm. The catalysed reaction is 7-aminomethyl-7-carbaguanine + 2 NADP(+) = 7-cyano-7-deazaguanine + 2 NADPH + 3 H(+). It participates in tRNA modification; tRNA-queuosine biosynthesis. Functionally, catalyzes the NADPH-dependent reduction of 7-cyano-7-deazaguanine (preQ0) to 7-aminomethyl-7-deazaguanine (preQ1). The protein is NADPH-dependent 7-cyano-7-deazaguanine reductase of Bacillus cytotoxicus (strain DSM 22905 / CIP 110041 / 391-98 / NVH 391-98).